Consider the following 570-residue polypeptide: MDIFRLLTRGASVKKDPKNKNIGDAVENAKASNIEKNDKIAAENQITKELDFFHNKRIINKVNYNKAKETHAEDKEDKDNDNEEDEIKEEESLQYQKPLITNDEEAKLLRKSNKSNVSGEDIPLPIGSFEDLITRFSFDKRLLNNLILNHFTEPTPIQCEAIPLALNNRDMLACAPTGSGKTLAFLIPLIQQVINDKDTQGLKGLIISPTKELANQIFLECIKLSNRIFLDKKRPLQVALLSKSLSAKLRNKVISDKKYDIIVSTPLRLIDVVKNEALDLSQVKHLIFDEADKLFDKTFVEQSDDILSSCSHSSLRKSMFSATIPSNVEEIAKSIMMDPVRVIIGHKEAANTSIEQKLVFCGNEEGKLIAIKQLVQEGEFKPPVIIFLESITRAKALYHEMMYDSLNVDVIHAERTQVQRNKIIERFKSGDLWCLITTDVLARGVDFKGVNLVINYDVPRTAQAYVHRIGRTGRGGRSGKAVTFYTKEDSIAIKPIINVMKQSGSEISEWMEKVSKMTKKEKELVKKGRAHSERKQISTVPKIDKIKRKRKLEMIQASKKRKAIETKETE.

Residues 69 to 78 (ETHAEDKEDK) show a composition bias toward basic and acidic residues. Positions 69–96 (ETHAEDKEDKDNDNEEDEIKEEESLQYQ) are disordered. Residues 79-89 (DNDNEEDEIKE) show a composition bias toward acidic residues. A Q motif motif is present at residues 131-159 (DLITRFSFDKRLLNNLILNHFTEPTPIQC). The region spanning 162–342 (IPLALNNRDM…KSIMMDPVRV (181 aa)) is the Helicase ATP-binding domain. 175 to 182 (APTGSGKT) is a binding site for ATP. The DEAD box motif lies at 289-292 (DEAD). Residues 353–515 (SIEQKLVFCG…EISEWMEKVS (163 aa)) enclose the Helicase C-terminal domain.

The protein belongs to the DEAD box helicase family. DDX52/ROK1 subfamily. Interacts with the U3 snoRNA and is associated with the 90S and 40S pre-ribosomes.

Its subcellular location is the nucleus. It localises to the nucleolus. It catalyses the reaction ATP + H2O = ADP + phosphate + H(+). Its function is as follows. ATP-dependent RNA helicase involved in 40S ribosomal subunit biogenesis. Required for the processing and cleavage of 35S pre-rRNA at sites A0, A1, and A2, leading to mature 18S rRNA. The sequence is that of ATP-dependent RNA helicase ROK1 (ROK1) from Vanderwaltozyma polyspora (strain ATCC 22028 / DSM 70294 / BCRC 21397 / CBS 2163 / NBRC 10782 / NRRL Y-8283 / UCD 57-17) (Kluyveromyces polysporus).